The chain runs to 475 residues: Aspartyl/glutamyl-tRNA(Asn/Gln) amidotransferase subunit B (475 aa).

The protein belongs to the GatB/GatE family. GatB subfamily. In terms of assembly, heterotrimer of A, B and C subunits.

The enzyme catalyses L-glutamyl-tRNA(Gln) + L-glutamine + ATP + H2O = L-glutaminyl-tRNA(Gln) + L-glutamate + ADP + phosphate + H(+). It carries out the reaction L-aspartyl-tRNA(Asn) + L-glutamine + ATP + H2O = L-asparaginyl-tRNA(Asn) + L-glutamate + ADP + phosphate + 2 H(+). Functionally, allows the formation of correctly charged Asn-tRNA(Asn) or Gln-tRNA(Gln) through the transamidation of misacylated Asp-tRNA(Asn) or Glu-tRNA(Gln) in organisms which lack either or both of asparaginyl-tRNA or glutaminyl-tRNA synthetases. The reaction takes place in the presence of glutamine and ATP through an activated phospho-Asp-tRNA(Asn) or phospho-Glu-tRNA(Gln). This chain is Aspartyl/glutamyl-tRNA(Asn/Gln) amidotransferase subunit B, found in Staphylococcus epidermidis (strain ATCC 12228 / FDA PCI 1200).